The following is a 657-amino-acid chain: Translation factor GUF1, mitochondrial (657 aa).

A mitochondrion-targeting transit peptide spans 1–21 (MLKTLGLRSLCPSLGGRGFRR). The tr-type G domain maps to 56-240 (ENYRNFSIVA…TIVDRIPPPT (185 aa)). GTP contacts are provided by residues 65-72 (AHVDHGKS), 132-136 (DTPGH), and 186-189 (NKID).

It belongs to the TRAFAC class translation factor GTPase superfamily. Classic translation factor GTPase family. LepA subfamily.

Its subcellular location is the mitochondrion inner membrane. It catalyses the reaction GTP + H2O = GDP + phosphate + H(+). Functionally, promotes mitochondrial protein synthesis. May act as a fidelity factor of the translation reaction, by catalyzing a one-codon backward translocation of tRNAs on improperly translocated ribosomes. Binds to mitochondrial ribosomes in a GTP-dependent manner. This is Translation factor GUF1, mitochondrial from Candida glabrata (strain ATCC 2001 / BCRC 20586 / JCM 3761 / NBRC 0622 / NRRL Y-65 / CBS 138) (Yeast).